The primary structure comprises 329 residues: Ig gamma-2C chain C region (329 aa).

The interval 1–97 (ARTTAPSVYP…ATKSNLIKRI (97 aa)) is CH1. The cysteines at positions 27 and 82 are disulfide-linked. The hinge stretch occupies residues 98-113 (EPRRPKPRPPTDICSC). Residues 114-222 (DDNLGRPSVF…PIEKTISKPR (109 aa)) form a CH2 region. Intrachain disulfides connect Cys143-Cys203 and Cys249-Cys307. Positions 223 to 329 (GKARTPQVYT…QKNLSRSPGK (107 aa)) are CH3.

In Rattus norvegicus (Rat), this protein is Ig gamma-2C chain C region.